The sequence spans 599 residues: Kelch-like protein 24a (599 aa).

Residues 65–132 (TDVIISVQGR…VYTGRACITT (68 aa)) enclose the BTB domain. The region spanning 167-269 (CLGIQRFADA…HPNYFVQTVE (103 aa)) is the BACK domain. Kelch repeat units follow at residues 313–362 (VIVV…ALRN), 364–406 (IILS…VLLG), 407–453 (KVYA…SCAG), 455–501 (LFVI…SLNH), 503–543 (IYVC…VCNG), and 545–591 (IYIL…TVHR).

As to quaternary structure, forms homodimers. Component of the BCR(KLHL24) E3 ubiquitin ligase complex.

It localises to the perikaryon. It is found in the cell projection. Its subcellular location is the axon. The protein localises to the cytoplasm. The protein resides in the cell junction. It localises to the desmosome. It is found in the adherens junction. Its function is as follows. Necessary to maintain the balance between intermediate filament stability and degradation, a process that is essential for skin integrity. Reduces kainate receptor-mediated currents in brain neurons, most probably by modulating channel properties. It is required for proper heart development. The chain is Kelch-like protein 24a from Danio rerio (Zebrafish).